A 338-amino-acid polypeptide reads, in one-letter code: Aspartate-semialdehyde dehydrogenase (338 aa).

NADP(+) is bound by residues 13 to 16 and 41 to 42; these read TGNV and SS. R101 contacts phosphate. Residue C132 is the Acyl-thioester intermediate of the active site. Position 159 (Q159) interacts with substrate. NADP(+) contacts are provided by residues 162-163 and P187; that span reads SG. K216 contributes to the phosphate binding site. R237 serves as a coordination point for substrate. Residue H244 is the Proton acceptor of the active site. N317 lines the NADP(+) pocket.

Belongs to the aspartate-semialdehyde dehydrogenase family. Homodimer.

It catalyses the reaction L-aspartate 4-semialdehyde + phosphate + NADP(+) = 4-phospho-L-aspartate + NADPH + H(+). It participates in amino-acid biosynthesis; L-lysine biosynthesis via DAP pathway; (S)-tetrahydrodipicolinate from L-aspartate: step 2/4. Its pathway is amino-acid biosynthesis; L-methionine biosynthesis via de novo pathway; L-homoserine from L-aspartate: step 2/3. It functions in the pathway amino-acid biosynthesis; L-threonine biosynthesis; L-threonine from L-aspartate: step 2/5. Functionally, catalyzes the NADPH-dependent formation of L-aspartate-semialdehyde (L-ASA) by the reductive dephosphorylation of L-aspartyl-4-phosphate. The protein is Aspartate-semialdehyde dehydrogenase of Rickettsia conorii (strain ATCC VR-613 / Malish 7).